The chain runs to 309 residues: MTVTVKMLVDKLKLKVIYGNEKLLSKPITTADISRPGLEMTGYFDFYSPERIQLVGMKEWSYLKTLTDHNRYSVFSNMFKEETPAVIVARGLDIPEEMYRAAKENGVAVLQGRNGTSSLSGDMSWYLNAQLAERTSVHGVLVDIYGMGVLIQGDSGIGKSETGLELVKRGHRLVADDRVDVYAKDEETLWGEPAEILHHLLEIRGVGIIDVMSLYGASAVRNSSQVQLAIYLENFEDGKVFDRLGNGNEEIELQGVKIPRVRIPVKTGRNVSVVIEAAAMNYRAKQMGFDATKTFEERLTNLISKNGED.

Residues His-138 and Lys-159 contribute to the active site. 153 to 160 (GDSGIGKS) lines the ATP pocket. Ser-160 serves as a coordination point for Mg(2+). Asp-177 serves as the catalytic Proton acceptor; for phosphorylation activity. Proton donor; for dephosphorylation activity. The segment at 201 to 210 (LEIRGVGIID) is important for the catalytic mechanism of both phosphorylation and dephosphorylation. Glu-202 contributes to the Mg(2+) binding site. Residue Arg-243 is part of the active site. The tract at residues 264–269 (PVKTGR) is important for the catalytic mechanism of dephosphorylation.

It belongs to the HPrK/P family. As to quaternary structure, homohexamer. Requires Mg(2+) as cofactor.

The enzyme catalyses [HPr protein]-L-serine + ATP = [HPr protein]-O-phospho-L-serine + ADP + H(+). The catalysed reaction is [HPr protein]-O-phospho-L-serine + phosphate + H(+) = [HPr protein]-L-serine + diphosphate. With respect to regulation, kinase activity is slightly activated by fructose 1,6-bisphosphate (FBP) at low ATP concentrations, and is inhibited by inorganic phosphate (Pi). Moreover, FBP, phosphoenolpyruvate and 2-phosphoglycerate, but not fructose 1-P, fructose 6-P, and ribulose 1,5-bisphosphate protect kinase activity against inhibition by Pi. Dephosphorylation of P-Ser-HPr by S.salivarius HPrK/P is strictly dependent on the presence of Pi, and is inhibited by FBP. FBP seems to modulate HPrK/P activities by enhancing affinity of the active site for ATP and, conversely, lowering the affinity for Pi. Its function is as follows. Catalyzes the ATP- as well as probably the pyrophosphate-dependent phosphorylation of 'Ser-46' in HPr, a phosphocarrier protein of the phosphoenolpyruvate-dependent sugar phosphotransferase system (PTS). HprK/P also catalyzes the pyrophosphate-producing, inorganic phosphate-dependent dephosphorylation (phosphorolysis) of seryl-phosphorylated HPr (P-Ser-HPr). The two antagonistic activities of HprK/P are regulated by several intracellular metabolites, which change their concentration in response to the absence or presence of rapidly metabolisable carbon sources (glucose, fructose, etc.) in the growth medium. Therefore, by controlling the phosphorylation state of HPr, the bifunctional HPr kinase/phosphorylase is a sensor enzyme that plays a major role in the regulation of carbon metabolism and sugar transport: it probably mediates carbon catabolite repression (CCR), and regulates PTS-catalyzed carbohydrate uptake and inducer exclusion. This is HPr kinase/phosphorylase (hprK) from Streptococcus salivarius.